Consider the following 460-residue polypeptide: A-type ATP synthase subunit B (460 aa).

Belongs to the ATPase alpha/beta chains family. As to quaternary structure, has multiple subunits with at least A(3), B(3), C, D, E, F, H, I and proteolipid K(x).

The protein resides in the cell membrane. In terms of biological role, component of the A-type ATP synthase that produces ATP from ADP in the presence of a proton gradient across the membrane. The B chain is a regulatory subunit. In Thermofilum pendens (strain DSM 2475 / Hrk 5), this protein is A-type ATP synthase subunit B.